Here is a 185-residue protein sequence, read N- to C-terminus: uncharacterized protein (185 aa).

This is an uncharacterized protein from Alkalihalophilus pseudofirmus (strain ATCC BAA-2126 / JCM 17055 / OF4) (Bacillus pseudofirmus).